A 316-amino-acid polypeptide reads, in one-letter code: Retinol dehydrogenase 11 (316 aa).

The helical; Signal-anchor for type II membrane protein transmembrane segment at 1 to 21 threads the bilayer; it reads MFGFLLLLSLPFILYLVTPKI. At 22–316 the chain is on the cytoplasmic side; sequence RKMLSSGVCT…CDLLGLPVDW (295 aa). 45–51 lines the NADP(+) pocket; the sequence is GANTGIG. Lysine 109 is subject to N6-acetyllysine. Substrate is bound at residue serine 174. Catalysis depends on tyrosine 199, which acts as the Proton acceptor.

The protein belongs to the short-chain dehydrogenases/reductases (SDR) family. Post-translationally, not glycosylated. In terms of tissue distribution, expressed at high level in liver and testis. Expressed at lower levels in smooth muscle, thymus, submaxillary gland and epididymis. In testis, expression is restricted to pachytene spermatocytes. Also expressed in four layers of the retina, including the outer segment of rods and cones.

Its subcellular location is the endoplasmic reticulum membrane. It catalyses the reaction all-trans-retinol + NADP(+) = all-trans-retinal + NADPH + H(+). The enzyme catalyses 11-cis-retinol + NADP(+) = 11-cis-retinal + NADPH + H(+). It carries out the reaction 9-cis-retinol + NADP(+) = 9-cis-retinal + NADPH + H(+). The catalysed reaction is 13-cis-retinol + NADP(+) = 13-cis-retinal + NADPH + H(+). It catalyses the reaction a medium-chain primary fatty alcohol + NADP(+) = a medium-chain fatty aldehyde + NADPH + H(+). The enzyme catalyses (2E,6Z)-nona-2,6-dien-1-ol + NADP(+) = (2E,6Z)-nona-2,6-dienal + NADPH + H(+). It carries out the reaction (E)-oct-2-en-1-ol + NADP(+) = (2E)-octenal + NADPH + H(+). The catalysed reaction is (E)-non-2-en-1-ol + NADP(+) = (E)-non-2-enal + NADPH + H(+). It catalyses the reaction heptan-1-ol + NADP(+) = heptanal + NADPH + H(+). The enzyme catalyses hexan-1-ol + NADP(+) = hexanal + NADPH + H(+). It carries out the reaction decan-1-ol + NADP(+) = decanal + NADPH + H(+). The catalysed reaction is nonan-1-ol + NADP(+) = nonanal + NADPH + H(+). It catalyses the reaction octan-1-ol + NADP(+) = octanal + NADPH + H(+). The enzyme catalyses (Z)-non-6-en-1-ol + NADP(+) = (Z)-non-6-enal + NADPH + H(+). It participates in cofactor metabolism; retinol metabolism. Its function is as follows. Retinol dehydrogenase with a clear preference for NADP. Displays high activity towards 9-cis, 11-cis and all-trans-retinol, and to a lesser extent on 13-cis-retinol. Also exhibits reductive activity towards toxic lipid peroxidation products such as medium-chain aldehydes trans-2-nonenal, nonanal, and cis-6-nonenal. Has no dehydrogenase activity towards steroid. Seems to be required for homeostasis of retinol in liver and testis. This chain is Retinol dehydrogenase 11 (Rdh11), found in Mus musculus (Mouse).